The chain runs to 169 residues: S-ribosylhomocysteine lyase (169 aa).

Fe cation is bound by residues H54, H58, and C129.

Belongs to the LuxS family. Homodimer. Fe cation is required as a cofactor.

It carries out the reaction S-(5-deoxy-D-ribos-5-yl)-L-homocysteine = (S)-4,5-dihydroxypentane-2,3-dione + L-homocysteine. Involved in the synthesis of autoinducer 2 (AI-2) which is secreted by bacteria and is used to communicate both the cell density and the metabolic potential of the environment. The regulation of gene expression in response to changes in cell density is called quorum sensing. Catalyzes the transformation of S-ribosylhomocysteine (RHC) to homocysteine (HC) and 4,5-dihydroxy-2,3-pentadione (DPD). The protein is S-ribosylhomocysteine lyase of Glaesserella parasuis serovar 5 (strain SH0165) (Haemophilus parasuis).